A 558-amino-acid polypeptide reads, in one-letter code: Dihydroxy-acid dehydratase (558 aa).

Cys51 provides a ligand contact to [2Fe-2S] cluster. Asp83 contributes to the Mg(2+) binding site. Position 124 (Cys124) interacts with [2Fe-2S] cluster. The Mg(2+) site is built by Asp125 and Lys126. Residue Lys126 is modified to N6-carboxylysine. Cys196 is a [2Fe-2S] cluster binding site. Glu447 serves as a coordination point for Mg(2+). Ser473 serves as the catalytic Proton acceptor.

Belongs to the IlvD/Edd family. Homodimer. Requires [2Fe-2S] cluster as cofactor. It depends on Mg(2+) as a cofactor.

The enzyme catalyses (2R)-2,3-dihydroxy-3-methylbutanoate = 3-methyl-2-oxobutanoate + H2O. It catalyses the reaction (2R,3R)-2,3-dihydroxy-3-methylpentanoate = (S)-3-methyl-2-oxopentanoate + H2O. The protein operates within amino-acid biosynthesis; L-isoleucine biosynthesis; L-isoleucine from 2-oxobutanoate: step 3/4. It participates in amino-acid biosynthesis; L-valine biosynthesis; L-valine from pyruvate: step 3/4. Functions in the biosynthesis of branched-chain amino acids. Catalyzes the dehydration of (2R,3R)-2,3-dihydroxy-3-methylpentanoate (2,3-dihydroxy-3-methylvalerate) into 2-oxo-3-methylpentanoate (2-oxo-3-methylvalerate) and of (2R)-2,3-dihydroxy-3-methylbutanoate (2,3-dihydroxyisovalerate) into 2-oxo-3-methylbutanoate (2-oxoisovalerate), the penultimate precursor to L-isoleucine and L-valine, respectively. This is Dihydroxy-acid dehydratase from Flavobacterium psychrophilum (strain ATCC 49511 / DSM 21280 / CIP 103535 / JIP02/86).